The chain runs to 487 residues: Protein nucleotidyltransferase YdiU (487 aa).

Residues glycine 90, glycine 92, arginine 93, lysine 113, aspartate 125, glycine 126, arginine 176, and arginine 183 each coordinate ATP. Aspartate 252 (proton acceptor) is an active-site residue. Mg(2+)-binding residues include asparagine 253 and aspartate 262. ATP is bound at residue aspartate 262.

This sequence belongs to the SELO family. It depends on Mg(2+) as a cofactor. Requires Mn(2+) as cofactor.

It catalyses the reaction L-seryl-[protein] + ATP = 3-O-(5'-adenylyl)-L-seryl-[protein] + diphosphate. It carries out the reaction L-threonyl-[protein] + ATP = 3-O-(5'-adenylyl)-L-threonyl-[protein] + diphosphate. The enzyme catalyses L-tyrosyl-[protein] + ATP = O-(5'-adenylyl)-L-tyrosyl-[protein] + diphosphate. The catalysed reaction is L-histidyl-[protein] + UTP = N(tele)-(5'-uridylyl)-L-histidyl-[protein] + diphosphate. It catalyses the reaction L-seryl-[protein] + UTP = O-(5'-uridylyl)-L-seryl-[protein] + diphosphate. It carries out the reaction L-tyrosyl-[protein] + UTP = O-(5'-uridylyl)-L-tyrosyl-[protein] + diphosphate. Its function is as follows. Nucleotidyltransferase involved in the post-translational modification of proteins. It can catalyze the addition of adenosine monophosphate (AMP) or uridine monophosphate (UMP) to a protein, resulting in modifications known as AMPylation and UMPylation. This chain is Protein nucleotidyltransferase YdiU, found in Azotobacter vinelandii (strain DJ / ATCC BAA-1303).